Here is a 1006-residue protein sequence, read N- to C-terminus: Phosphatidylinositol-3,5-bisphosphate 3-phosphatase MTMR3 (1006 aa).

Residues 1 to 10 show a composition bias toward low complexity; that stretch reads MTVTSSAAID. Residues 1–29 form a disordered region; sequence MTVTSSAAIDIGGGGGGRRSDRLDSDRTS. A compositionally biased stretch (basic and acidic residues) spans 18 to 29; sequence RRSDRLDSDRTS. In terms of domain architecture, Myotubularin phosphatase spans 224 to 630; that stretch reads AWKFSEAVDE…INLRVWHEVF (407 aa). 3 residues coordinate a 1,2-diacyl-sn-glycero-3-phospho-(1D-myo-inositol-3,5-bisphosphate): Asn377, Asn402, and Ile403. A 1,2-diacyl-sn-glycero-3-phospho-(1D-myo-inositol-3-phosphate) is bound by residues Asn377, Asn402, and Ile403. Residue Cys463 is the Phosphocysteine intermediate of the active site. Residues Ser464, Asp465, Gly466, Trp467, Asp468, Arg469, Lys505, and Arg509 each coordinate a 1,2-diacyl-sn-glycero-3-phospho-(1D-myo-inositol-3,5-bisphosphate). Residues Ser464, Asp465, Gly466, Trp467, Asp468, and Arg469 each contribute to the a 1,2-diacyl-sn-glycero-3-phospho-(1D-myo-inositol-3-phosphate) site. Arg509 is an a 1,2-diacyl-sn-glycero-3-phospho-(1D-myo-inositol-3-phosphate) binding site. Residues 641 to 705 are disordered; the sequence is FSPKEERPLS…PSDNTNSLPM (65 aa). A compositionally biased stretch (polar residues) spans 651–705; it reads GCTTPMNTSTSTNLVKSKSSESINSLNVDGSAKESSQQHPTCSTTPSDNTNSLPM. The FYVE-type zinc finger occupies 818–883; that stretch reads EGESGHCAYC…ACDSCYDSMH (66 aa). Residues Cys824, Cys827, Cys845, Cys848, Cys853, Cys856, Cys875, and Cys878 each contribute to the Zn(2+) site. Positions 886–1006 are disordered; sequence DLKLSSSSTT…DVLDVNEQPL (121 aa). Composition is skewed to low complexity over residues 890 to 901 and 913 to 926; these read SSSSTTTTSSST and DNNS…VSEN. Composition is skewed to basic and acidic residues over residues 933-954 and 976-985; these read VEEK…ETKC and HSRDPLKSID.

It belongs to the protein-tyrosine phosphatase family. Non-receptor class myotubularin subfamily. As to expression, expressed in the body wall muscle and in eggs. Expressed in head neurons. Expressed in the intestine. Expressed in pharyngeal cells, vulval muscle cells and cells of the tail region.

The protein localises to the cytoplasm. It localises to the membrane. The enzyme catalyses a 1,2-diacyl-sn-glycero-3-phospho-(1D-myo-inositol-3,5-bisphosphate) + H2O = a 1,2-diacyl-sn-glycero-3-phospho-(1D-myo-inositol-5-phosphate) + phosphate. The catalysed reaction is a 1,2-diacyl-sn-glycero-3-phospho-(1D-myo-inositol-3-phosphate) + H2O = a 1,2-diacyl-sn-glycero-3-phospho-(1D-myo-inositol) + phosphate. It carries out the reaction 1,2-dihexadecanoyl-sn-glycero-3-phospho-(1D-myo-inositol-3-phosphate) + H2O = 1,2-dihexadecanoyl-sn-glycero-3-phospho-(1D-myo-inositol) + phosphate. It catalyses the reaction 1,2-dihexadecanoyl-sn-glycero-3-phospho-(1D-myo-inositol-3,5-phosphate) + H2O = 1,2-dihexadecanoyl-sn-glycero-3-phospho-(1D-myo-inositol-5-phosphate) + phosphate. The enzyme catalyses 1,2-dioctanoyl-sn-glycero-3-phospho-(1-D-myo-inositol-3-phosphate) + H2O = 1,2-dioctanoyl-sn-glycero-3-phospho-(1D-myo-inositol) + phosphate. Its activity is regulated as follows. Inhibited by sodium vanadate and peroxide. Functionally, preferentially dephosphorylates phosphatidylinositol 3-phosphate (PI3P), and has some activity towards phosphatidylinositol 3,5-bisphosphate (PI35P). Positively regulates autophagy and is recruited to autophagosomes by PI3P where it catalyzes PI3P turnover to promote autophagosome maturation. Thought to have a role in maintenance of muscle function. Involved in locomotion and lifespan determination. The sequence is that of Phosphatidylinositol-3,5-bisphosphate 3-phosphatase MTMR3 from Caenorhabditis elegans.